We begin with the raw amino-acid sequence, 348 residues long: Rhodopsin (348 aa).

The residue at position 1 (methionine 1) is an N-acetylmethionine. The Extracellular portion of the chain corresponds to 1–36 (MNGTEGPNFYVPFSNKTGVVRSPFEAPQYYLAEPWQ). N-linked (GlcNAc...) asparagine glycans are attached at residues asparagine 2 and asparagine 15. The helical transmembrane segment at 37–61 (FSMLAAYMFLLIMLGFPINFLTLYV) threads the bilayer. Topologically, residues 62-73 (TVQHKKLRTPLN) are cytoplasmic. A helical transmembrane segment spans residues 74–96 (YILLNLAVADLFMVFGGFTTTLY). Over 97 to 110 (TSLHGYFVFGPTGC) the chain is Extracellular. Cysteine 110 and cysteine 187 are joined by a disulfide. Residues 111-133 (NLEGFFATLGGEIALWSLVVLAI) form a helical membrane-spanning segment. Positions 134–136 (ERY) match the 'Ionic lock' involved in activated form stabilization motif. The Cytoplasmic portion of the chain corresponds to 134 to 152 (ERYVVVCKPMSNFRFGENH). A helical transmembrane segment spans residues 153–173 (AIMGVAFTWVMALACAAPPLV). Residues 174-202 (GWSRYIPEGMQCSCGIDYYTPHEETNNES) are Extracellular-facing. Glutamate 201 provides a ligand contact to Zn(2+). Residues 203-224 (FVIYMFVVHFIIPLIVIFFCYG) traverse the membrane as a helical segment. Residues 225–252 (QLVFTVKEAAAQQQESATTQKAEKEVTR) are Cytoplasmic-facing. The helical transmembrane segment at 253-274 (MVIIMVIAFLICWLPYAGVAFY) threads the bilayer. Residues 275 to 286 (IFTHQGSDFGPI) are Extracellular-facing. Glutamine 279 serves as a coordination point for Zn(2+). A helical membrane pass occupies residues 287–308 (FMTIPAFFAKTSAVYNPVIYIM). Lysine 296 is modified (N6-(retinylidene)lysine). The Cytoplasmic portion of the chain corresponds to 309–348 (MNKQFRNCMVTTLCCGKNPLGDDEASTTVSKTETSQVAPA). 2 S-palmitoyl cysteine lipidation sites follow: cysteine 322 and cysteine 323. An interaction with SAG region spans residues 330 to 348 (DDEASTTVSKTETSQVAPA). Serine 334 bears the Phosphoserine mark. Phosphothreonine is present on residues threonine 335 and threonine 336. The residue at position 338 (serine 338) is a Phosphoserine. Phosphothreonine is present on residues threonine 340 and threonine 342. Serine 343 carries the phosphoserine; by RK and GRK7 modification.

It belongs to the G-protein coupled receptor 1 family. Opsin subfamily. Homodimer. May form a complex composed of RHO, GRK1 and RCVRN in a Ca(2+)-dependent manner; RCVRN prevents the interaction between GRK1 and RHO. Interacts with GRK1. Interacts (phosphorylated form) with SAG. Interacts with GNAT1. Interacts with GNAT3. SAG and G-proteins compete for a common binding site. Interacts with PRCD; the interaction promotes PRCD stability. Forms a complex with ASAP1 and ARF4. Forms a complex with ASAP1, RAB11A, Rabin8/RAB3IP, ARF4 and RAB11FIP3; the complex regulates Golgi-to-cilia rhodopsin/RHO transport in photoreceptors. Phosphorylated on some or all of the serine and threonine residues present in the C-terminal region. Post-translationally, contains one covalently linked retinal chromophore. Upon light absorption, the covalently bound 11-cis-retinal is converted to all-trans-retinal. After hydrolysis of the Schiff base and release of the covalently bound all-trans-retinal, active rhodopsin is regenerated by binding of a fresh molecule of 11-cis-retinal. As to expression, expressed in rod-shaped photoreceptor cells in the retina that mediate vision in dim light (at protein level).

The protein resides in the membrane. The protein localises to the cell projection. Its subcellular location is the cilium. It is found in the photoreceptor outer segment. Photoreceptor required for image-forming vision at low light intensity. Required for photoreceptor cell viability after birth. Light-induced isomerization of 11-cis to all-trans retinal triggers a conformational change that activates signaling via G-proteins. Subsequent receptor phosphorylation mediates displacement of the bound G-protein alpha subunit by the arrestin SAG and terminates signaling. The chain is Rhodopsin (RHO) from Bos taurus (Bovine).